A 95-amino-acid polypeptide reads, in one-letter code: Aspartyl/glutamyl-tRNA(Asn/Gln) amidotransferase subunit C (95 aa).

It belongs to the GatC family. Heterotrimer of A, B and C subunits.

The enzyme catalyses L-glutamyl-tRNA(Gln) + L-glutamine + ATP + H2O = L-glutaminyl-tRNA(Gln) + L-glutamate + ADP + phosphate + H(+). It carries out the reaction L-aspartyl-tRNA(Asn) + L-glutamine + ATP + H2O = L-asparaginyl-tRNA(Asn) + L-glutamate + ADP + phosphate + 2 H(+). Functionally, allows the formation of correctly charged Asn-tRNA(Asn) or Gln-tRNA(Gln) through the transamidation of misacylated Asp-tRNA(Asn) or Glu-tRNA(Gln) in organisms which lack either or both of asparaginyl-tRNA or glutaminyl-tRNA synthetases. The reaction takes place in the presence of glutamine and ATP through an activated phospho-Asp-tRNA(Asn) or phospho-Glu-tRNA(Gln). The sequence is that of Aspartyl/glutamyl-tRNA(Asn/Gln) amidotransferase subunit C from Dehalococcoides mccartyi (strain CBDB1).